The sequence spans 197 residues: ATP-dependent Clp protease proteolytic subunit 1 (197 aa).

Catalysis depends on serine 88, which acts as the Nucleophile. Histidine 113 is a catalytic residue.

Belongs to the peptidase S14 family. As to quaternary structure, fourteen ClpP subunits assemble into 2 heptameric rings which stack back to back to give a disk-like structure with a central cavity, resembling the structure of eukaryotic proteasomes.

The protein localises to the cytoplasm. The catalysed reaction is Hydrolysis of proteins to small peptides in the presence of ATP and magnesium. alpha-casein is the usual test substrate. In the absence of ATP, only oligopeptides shorter than five residues are hydrolyzed (such as succinyl-Leu-Tyr-|-NHMec, and Leu-Tyr-Leu-|-Tyr-Trp, in which cleavage of the -Tyr-|-Leu- and -Tyr-|-Trp bonds also occurs).. In terms of biological role, cleaves peptides in various proteins in a process that requires ATP hydrolysis. Has a chymotrypsin-like activity. Plays a major role in the degradation of misfolded proteins. This is ATP-dependent Clp protease proteolytic subunit 1 from Leifsonia xyli subsp. xyli (strain CTCB07).